A 244-amino-acid polypeptide reads, in one-letter code: Chlorosome protein I (244 aa).

A 2Fe-2S ferredoxin-type domain is found at 1 to 95 (MNLIINDKTA…TVKVLSRPEE (95 aa)). Residues Cys33, Cys39, Cys42, and Cys77 each coordinate [2Fe-2S] cluster.

The cofactor is [2Fe-2S] cluster.

The protein resides in the chlorosome. In terms of biological role, could play a direct role in the oxidation or reduction of the quenching species formed in the chlorosome. This chain is Chlorosome protein I (csmI), found in Chlorobaculum tepidum (strain ATCC 49652 / DSM 12025 / NBRC 103806 / TLS) (Chlorobium tepidum).